We begin with the raw amino-acid sequence, 432 residues long: uncharacterized protein (432 aa).

It to M.jannaschii MJ0977.

This is an uncharacterized protein from Methanocaldococcus jannaschii (strain ATCC 43067 / DSM 2661 / JAL-1 / JCM 10045 / NBRC 100440) (Methanococcus jannaschii).